Reading from the N-terminus, the 324-residue chain is Olfactory receptor 4K15 (324 aa).

Residues 1–25 are Extracellular-facing; sequence MNETNHSRVTEFVLLGLSSSRELQP. N-linked (GlcNAc...) asparagine glycans are attached at residues Asn-2 and Asn-5. A helical transmembrane segment spans residues 26–49; the sequence is FLFLTFSLLYLAILLGNFLIILTV. The Cytoplasmic portion of the chain corresponds to 50 to 57; that stretch reads TSDSRLHT. Residues 58–79 form a helical membrane-spanning segment; that stretch reads PMYFLLANLSFIDVCVASFATP. Over 80–100 the chain is Extracellular; that stretch reads KMIADFLVERKTISFDACLAQ. A disulfide bond links Cys-97 and Cys-189. Residues 101-120 traverse the membrane as a helical segment; sequence IFFVHLFTGSEMVLLVSMAY. The Cytoplasmic portion of the chain corresponds to 121 to 139; that stretch reads DRYVAICKPLHYMTVMSRR. A helical membrane pass occupies residues 140 to 158; it reads VCVVLVLISWFVGFIHTTS. The Extracellular portion of the chain corresponds to 159-195; it reads QLAFTVNLPFCGPNKVDSFFCDLPLVTKLACIDTYVV. The helical transmembrane segment at 196 to 219 threads the bilayer; it reads SLLIVADSGFLSLSSFLLLVVSYT. The Cytoplasmic segment spans residues 220–235; sequence VILVTVRNRSSASMAK. A helical transmembrane segment spans residues 236–258; it reads ARSTLTAHITVVTLFFGPCIFIY. Residues 259–269 lie on the Extracellular side of the membrane; that stretch reads VWPFSSYSVDK. Residues 270-289 traverse the membrane as a helical segment; that stretch reads VLAVFYTIFTLILNPVIYTL. The Cytoplasmic segment spans residues 290-324; it reads RNKEVKAAMSKLKSRYLKPSQVSVVIRNVLFLETK.

Belongs to the G-protein coupled receptor 1 family.

The protein resides in the cell membrane. Its function is as follows. Odorant receptor. This Homo sapiens (Human) protein is Olfactory receptor 4K15 (OR4K15).